The sequence spans 465 residues: Iron-sulfur cluster assembly SufBD family protein SSP1857 (465 aa).

This sequence belongs to the iron-sulfur cluster assembly SufBD family.

The chain is Iron-sulfur cluster assembly SufBD family protein SSP1857 from Staphylococcus saprophyticus subsp. saprophyticus (strain ATCC 15305 / DSM 20229 / NCIMB 8711 / NCTC 7292 / S-41).